The primary structure comprises 56 residues: Large ribosomal subunit protein bL33 (56 aa).

Residues 1 to 12 (MASKGGRDKIKL) are compositionally biased toward basic and acidic residues. Positions 1 to 30 (MASKGGRDKIKLESTAGTGHFYTTTKNKRT) are disordered. Polar residues predominate over residues 15 to 25 (TAGTGHFYTTT).

The protein belongs to the bacterial ribosomal protein bL33 family.

The chain is Large ribosomal subunit protein bL33 from Ralstonia nicotianae (strain ATCC BAA-1114 / GMI1000) (Ralstonia solanacearum).